The chain runs to 48 residues: uncharacterized protein (48 aa).

Residues 1–48 (MLFCNNNNNNNNNNNNNNNNNNNNNNNNNNNNNNNNNNNSSNNNNFSR) are disordered.

This is an uncharacterized protein from Dictyostelium discoideum (Social amoeba).